Reading from the N-terminus, the 393-residue chain is Formate-dependent phosphoribosylglycinamide formyltransferase (393 aa).

Residues 22–23 (EL) and glutamate 82 each bind N(1)-(5-phospho-beta-D-ribosyl)glycinamide. ATP-binding positions include arginine 114, lysine 155, 160–165 (SSGHGQ), 195–198 (EGFI), and glutamate 203. In terms of domain architecture, ATP-grasp spans 119–308 (RLAAEELGLP…QFALHARAIL (190 aa)). 2 residues coordinate Mg(2+): glutamate 267 and glutamate 279. N(1)-(5-phospho-beta-D-ribosyl)glycinamide-binding positions include aspartate 286, lysine 356, and 363–364 (RR).

The protein belongs to the PurK/PurT family. Homodimer.

It catalyses the reaction N(1)-(5-phospho-beta-D-ribosyl)glycinamide + formate + ATP = N(2)-formyl-N(1)-(5-phospho-beta-D-ribosyl)glycinamide + ADP + phosphate + H(+). The protein operates within purine metabolism; IMP biosynthesis via de novo pathway; N(2)-formyl-N(1)-(5-phospho-D-ribosyl)glycinamide from N(1)-(5-phospho-D-ribosyl)glycinamide (formate route): step 1/1. Involved in the de novo purine biosynthesis. Catalyzes the transfer of formate to 5-phospho-ribosyl-glycinamide (GAR), producing 5-phospho-ribosyl-N-formylglycinamide (FGAR). Formate is provided by PurU via hydrolysis of 10-formyl-tetrahydrofolate. The chain is Formate-dependent phosphoribosylglycinamide formyltransferase from Haemophilus ducreyi (strain 35000HP / ATCC 700724).